Here is a 240-residue protein sequence, read N- to C-terminus: Probable hydroxyacylglutathione hydrolase (240 aa).

The Zn(2+) site is built by His33, His35, Asp37, His38, His95, and Asp119. Residues Arg128, 158-160 (HEY), and 234-237 (REEK) contribute to the substrate site. Position 158 (His158) interacts with Zn(2+).

It belongs to the metallo-beta-lactamase superfamily. Glyoxalase II family. Requires Zn(2+) as cofactor.

The enzyme catalyses an S-(2-hydroxyacyl)glutathione + H2O = a 2-hydroxy carboxylate + glutathione + H(+). Its pathway is secondary metabolite metabolism; methylglyoxal degradation; (R)-lactate from methylglyoxal: step 2/2. Thiolesterase that catalyzes the hydrolysis of S-D-lactoyl-glutathione to form glutathione and D-lactic acid. The chain is Probable hydroxyacylglutathione hydrolase from Schistosoma mansoni (Blood fluke).